A 238-amino-acid polypeptide reads, in one-letter code: MRPNNRENNQPRQIKITRNYTKHAEGSVLVEFGDTKVLCTATVEDAVPRFLKGQGQGWVTAEYGMLPRSTHSRMQREAAKGKQSGRTMEIQRLIARSLRAMVDLKALGERAITLDCDVIQADGGTRTASITGAAVALCDAINSLIENGTLKTNPIKGLVSAISVGIVEGQAVCDLEYVEDSAAETDMNVVMMEDGRMIEVQGTAEGEPFSHEELLTLLDLAKQGCNQIFIAQRKVLGL.

Phosphate is bound by residues R86 and 124–126; that span reads GTR.

It belongs to the RNase PH family. In terms of assembly, homohexameric ring arranged as a trimer of dimers.

The enzyme catalyses tRNA(n+1) + phosphate = tRNA(n) + a ribonucleoside 5'-diphosphate. Its function is as follows. Phosphorolytic 3'-5' exoribonuclease that plays an important role in tRNA 3'-end maturation. Removes nucleotide residues following the 3'-CCA terminus of tRNAs; can also add nucleotides to the ends of RNA molecules by using nucleoside diphosphates as substrates, but this may not be physiologically important. Probably plays a role in initiation of 16S rRNA degradation (leading to ribosome degradation) during starvation. This Haemophilus influenzae (strain PittGG) protein is Ribonuclease PH.